A 230-amino-acid polypeptide reads, in one-letter code: Large ribosomal subunit protein uL1 (230 aa).

Belongs to the universal ribosomal protein uL1 family. In terms of assembly, part of the 50S ribosomal subunit.

Its function is as follows. Binds directly to 23S rRNA. The L1 stalk is quite mobile in the ribosome, and is involved in E site tRNA release. Protein L1 is also a translational repressor protein, it controls the translation of the L11 operon by binding to its mRNA. This chain is Large ribosomal subunit protein uL1, found in Bacillus cereus (strain G9842).